We begin with the raw amino-acid sequence, 621 residues long: E3 SUMO-protein ligase PIAS2 (621 aa).

The SAP domain maps to 11-45 (VSSFRVSELQVLLGFAGRNKSGRKHDLLMRALHLL). An LXXLL motif motif is present at residues 19-23 (LQVLL). Residues K46 and K249 each participate in a glycyl lysine isopeptide (Lys-Gly) (interchain with G-Cter in SUMO2) cross-link. The region spanning 134–299 (QPSPPIPPVH…SMSVYLVRQL (166 aa)) is the PINIT domain. Residues 331–412 (PDSEIATTSL…FMEILNDCSD (82 aa)) form an SP-RING-type zinc finger. Residues C362, H364, C385, and C388 each contribute to the Zn(2+) site. Glycyl lysine isopeptide (Lys-Gly) (interchain with G-Cter in SUMO2) cross-links involve residues K430, K435, K443, and K452. Residues 467–473 (IDVIDLT) are SUMO1-binding. S476, S477, and S478 each carry phosphoserine. The short motif at 484 to 492 (PPAKRKCIF) is the Nuclear localization signal element. A Glycyl lysine isopeptide (Lys-Gly) (interchain with G-Cter in SUMO2) cross-link involves residue K489. S499 is subject to Phosphoserine. A Glycyl lysine isopeptide (Lys-Gly) (interchain with G-Cter in SUMO2) cross-link involves residue K502. Low complexity predominate over residues 577-610 (TASSTSVTTTSPHESSTHVSSSSSRSETGVITSS). A disordered region spans residues 577–621 (TASSTSVTTTSPHESSTHVSSSSSRSETGVITSSGRNIPDIISLD).

It belongs to the PIAS family. Binds SUMO1 and UBE2I. Interacts with AXIN1, JUN, MDM2, PARK7, TP53 and TP73 isoform alpha, but not TP73 isoform beta. Interacts with STAT4 following IL12 and IFN-alpha stimulation of T-cells. Interacts also with GTF2I, GTF2IRD1, IKFZ1, DAB2 and MSX2, as well as with several steroid receptors, including ESR1, ESR2, NR3C1, PGR, AR, and with NCOA2. Sumoylation of a target protein seems to enhance the interaction. Binds to sumoylated ELK1. Interacts with PLAG1. Binds DNA, such as CDKN1A promoter, in a sequence-specific manner. Interacts with KLF8; the interaction results in SUMO ligation and repression of KLF8 transcriptional activity and of its cell cycle progression into G(1) phase. Interacts with IFIH1/MDA5. Interacts with PML. Interacts with PRDM1. Sumoylated.

Its subcellular location is the nucleus speckle. The protein resides in the nucleus. The protein localises to the PML body. The catalysed reaction is S-ubiquitinyl-[E2 ubiquitin-conjugating enzyme]-L-cysteine + [acceptor protein]-L-lysine = [E2 ubiquitin-conjugating enzyme]-L-cysteine + N(6)-ubiquitinyl-[acceptor protein]-L-lysine.. Its pathway is protein modification; protein sumoylation. Its function is as follows. Functions as an E3-type small ubiquitin-like modifier (SUMO) ligase, stabilizing the interaction between UBE2I and the substrate, and as a SUMO-tethering factor. Plays a crucial role as a transcriptional coregulation in various cellular pathways, including the STAT pathway, the p53 pathway and the steroid hormone signaling pathway. The effects of this transcriptional coregulation, transactivation or silencing may vary depending upon the biological context and PIAS2 isoform studied. However, it seems to be mostly involved in gene silencing. Binds to sumoylated ELK1 and enhances its transcriptional activity by preventing recruitment of HDAC2 by ELK1, thus reversing SUMO-mediated repression of ELK1 transactivation activity. Isoform PIASx-beta, but not isoform PIASx-alpha, promotes MDM2 sumoylation. Isoform PIASx-alpha promotes PARK7 sumoylation. Isoform PIASx-beta promotes NCOA2 sumoylation more efficiently than isoform PIASx-alpha. Sumoylates PML at'Lys-65' and 'Lys-160'. The chain is E3 SUMO-protein ligase PIAS2 (Pias2) from Mus musculus (Mouse).